Reading from the N-terminus, the 552-residue chain is MMDDKDLEAEIHPLKNEDKKSQENLGNLPKTEDNLKNKPVPSRLSRCRTVAFFLSLFICLFVVFVLSFIIPCPDRPSSEDKWRLDYDYAVTYDFLALGDVDRDEVQDVLFLYKNTNSSNNSTRSCADEGFSTPCTFMAAVSGTNGTVLWERPLAQDVAHVKCAVPQTRDSKVSSACVLVGRLGSFMAVNFFTGETLWSHPRSFSGNASILSPLLQVPDIDGDGAPDLLMLSREGQEVSGALYSGSTGYQIGHRGSLGVDGDGVALLHVTRTGAQYILLPCASALCGVSVKGLYKRITGRDDHFKEDPSWENMLNRSAHRRLLHSSGAVRYLMNVPGKTGQDLLLVSSEDCKLLDGQDLVPRWTLGATQVLRKPILGHYKPDTLAVVIENGTSLDRQILLLDLSTGSMLWSQPLPSLPGAPPSTSLMTADHRSAFFFWGLHDPVSANEMDPQDTQHSLYMFHPTLPGILLELANVSANIVAFDAVLFEPSRHAAYVLLTGPASSDVPGLVSLTKHRVRDLVPGSRVIHLSEGSSDSDQAIRDRFSRLRYRSEV.

Residues 1-40 (MMDDKDLEAEIHPLKNEDKKSQENLGNLPKTEDNLKNKPV) are disordered. Over 1 to 49 (MMDDKDLEAEIHPLKNEDKKSQENLGNLPKTEDNLKNKPVPSRLSRCRT) the chain is Cytoplasmic. The span at 8–22 (EAEIHPLKNEDKKSQ) shows a compositional bias: basic and acidic residues. Ser-21 is subject to Phosphoserine. A helical; Signal-anchor for type II membrane protein membrane pass occupies residues 50–70 (VAFFLSLFICLFVVFVLSFII). The Extracellular portion of the chain corresponds to 71 to 552 (PCPDRPSSED…FSRLRYRSEV (482 aa)). N-linked (GlcNAc...) asparagine glycosylation is found at Asn-116, Asn-119, Asn-314, and Asn-473.

This sequence belongs to the FAM234 family.

It localises to the membrane. This chain is Protein FAM234A (Fam234a), found in Rattus norvegicus (Rat).